The primary structure comprises 303 residues: Probable 5-dehydro-4-deoxyglucarate dehydratase (303 aa).

It belongs to the DapA family.

The enzyme catalyses 5-dehydro-4-deoxy-D-glucarate + H(+) = 2,5-dioxopentanoate + CO2 + H2O. It functions in the pathway carbohydrate acid metabolism; D-glucarate degradation; 2,5-dioxopentanoate from D-glucarate: step 2/2. The chain is Probable 5-dehydro-4-deoxyglucarate dehydratase from Pseudomonas syringae pv. syringae (strain B728a).